A 431-amino-acid chain; its full sequence is Reticulon-like protein B17 (431 aa).

2 disordered regions span residues 1 to 110 and 126 to 152; these read MEST…SEAV and PPRK…SSSD. Polar residues predominate over residues 12–26; it reads TKSASRLQDSSNPPN. Residues 126-138 are compositionally biased toward basic residues; the sequence is PPRKRKTNGRPKK. Residues 142-152 are compositionally biased toward polar residues; that stretch reads SSAPPLCSSSD. The region spanning 168 to 355 is the Reticulon domain; the sequence is ISDLVMWRDV…VTAFWNLTSI (188 aa). Transmembrane regions (helical) follow at residues 177-197, 202-222, 286-306, and 349-369; these read VAKS…SCFA, FSVF…SFLS, YGHL…SFTI, and FWNL…LVIF. Positions 382 to 415 are enriched in acidic residues; that stretch reads EVEPVENEQEEETLPQEEETVPQEEETVPQEEEQ. A disordered region spans residues 382–422; that stretch reads EVEPVENEQEEETLPQEEETVPQEEETVPQEEEQTQPSEER.

The protein resides in the endoplasmic reticulum membrane. The sequence is that of Reticulon-like protein B17 (RTNLB17) from Arabidopsis thaliana (Mouse-ear cress).